A 658-amino-acid chain; its full sequence is MNVTITSPFWKRRRDQIVESVIPYQWGVMNDEIDTTVPDDPAGNQLADSKSHAVANLKVAAGELDDEFHGMVFQDSDVYKWLEEAAYALAYHPDPELKALCDRTVDLIARAQQSDGYLDTPYQIKSGVWADRPRFSLIQQSHEMYVMGHYIEAAVAYHQVTGNEQALEVAKKMADCLDANFGPEEGKIHGADGHPEIELALAKLYEETGEKRYLTLSQYLIDVRGQDPQFYAKQLKAMNGDNIFHDLGFYKPTYFQAAEPVRDQQTADGHAVRVGYLCTGVAHVGRLLGDQGLIDTAKRFWKNIVTRRMYVTGAIGSTHVGESFTYDYDLPNDTMYGETCASVAMSMFAQQMLDLEPKGEYADVLEKELFNGSIAGISLDGKQYYYVNALETTPDGLDNPDRHHVLSHRVDWFGCACCPANIARLIASVDRYIYTERDGGKTVLSHQFIANTAEFASGLTVEQRSNFPWDGHVEYTVSLPASATDSSVRFGLRIPGWSRGSYTLTVNGKPAVGSLEDGFVYLVVNAGDTLEIALELDMSVKFVRANSRVRSDAGQVAVMRGPLVYCAEQVDNPGDLWNYRLADGVTGADAAVAFQADLLGGVDTVDLPAVREHADEDDAPLYVDADEPRAGEPATLRLVPYYSWANREIGEMRVFQRR.

Residues histidine 142, aspartate 192–histidine 194, histidine 270, and glutamate 322 contribute to the beta-L-arabinofuranose site. The active-site Proton donor/acceptor is glutamate 322. Residues glutamate 338, cysteine 340, cysteine 417, and cysteine 418 each contribute to the Zn(2+) site. Cysteine 417 acts as the Nucleophile; S-glycosyl-cysteine intermediate in catalysis.

Belongs to the glycosyl hydrolase 127 family. In terms of assembly, homodimer in solution. The cofactor is Zn(2+).

It carries out the reaction beta-L-arabinofuranosyl-(1-&gt;2)-beta-L-arabinofuranose + H2O = 2 beta-L-arabinofuranose. Its activity is regulated as follows. Strongly inhibited in the presence of thiol modifiers, suggesting a crucial role for cysteine residues in catalysis. Slightly inhibited by EDTA. Functionally, beta-L-arabinofuranosidase that removes the beta-L-arabinofuranose residue from the non-reducing end of various substrates, including beta-L-arabinofuranosyl-hydroxyproline (Ara-Hyp), Ara-beta-1,2-Ara-beta-Hyp (Ara(2)-Hyp), Ara-beta-1,2-Ara-beta-1,2-Ara-beta-Hyp (Ara(3)-Hyp), and beta-L-arabinofuranosyl-(1-&gt;2)-1-O-methyl-beta-L-arabinofuranose. In the presence of 1-alkanols, shows transglycosylation activity, retaining the anomeric configuration of the arabinofuranose residue. This Bifidobacterium longum subsp. longum (strain ATCC 15707 / DSM 20219 / JCM 1217 / NCTC 11818 / E194b) protein is Non-reducing end beta-L-arabinofuranosidase.